The primary structure comprises 446 residues: Argininosuccinate lyase (446 aa).

Belongs to the lyase 1 family. Argininosuccinate lyase subfamily.

It is found in the cytoplasm. It catalyses the reaction 2-(N(omega)-L-arginino)succinate = fumarate + L-arginine. Its pathway is amino-acid biosynthesis; L-arginine biosynthesis; L-arginine from L-ornithine and carbamoyl phosphate: step 3/3. In Sulfurisphaera tokodaii (strain DSM 16993 / JCM 10545 / NBRC 100140 / 7) (Sulfolobus tokodaii), this protein is Argininosuccinate lyase.